The sequence spans 312 residues: Malate dehydrogenase (312 aa).

NAD(+)-binding positions include 7–13 and D34; that span reads GAAGGIG. The substrate site is built by R81 and R87. Residues N94 and 117-119 contribute to the NAD(+) site; that span reads ITN. N119 and R153 together coordinate substrate. H177 serves as the catalytic Proton acceptor. M227 serves as a coordination point for NAD(+).

This sequence belongs to the LDH/MDH superfamily. MDH type 1 family. As to quaternary structure, homodimer.

The enzyme catalyses (S)-malate + NAD(+) = oxaloacetate + NADH + H(+). In terms of biological role, catalyzes the reversible oxidation of malate to oxaloacetate. The polypeptide is Malate dehydrogenase (Yersinia pseudotuberculosis serotype O:1b (strain IP 31758)).